Here is a 280-residue protein sequence, read N- to C-terminus: Pupal cuticle protein 36a (280 aa).

The N-terminal stretch at 1–15 (MKLFVLAAVLGVCLA) is a signal peptide. A Chitin-binding type R&amp;R domain is found at 135–198 (AEGFAYDFET…SQGAHLPTPP (64 aa)). The disordered stretch occupies residues 258 to 280 (GAGRAGGTATSASEAPTTTIRLM).

The chain is Pupal cuticle protein 36a (PCP36a) from Manduca sexta (Tobacco hawkmoth).